The chain runs to 432 residues: GTPase Obg (432 aa).

Residues 1–158 form the Obg domain; the sequence is MFVDQIKIEV…RKLKLELKVL (158 aa). An OBG-type G domain is found at 159-335; the sequence is ADVGLVGFPS…LTHRTADVLE (177 aa). Residues 165-172, 190-194, 212-215, 282-285, and 316-318 contribute to the GTP site; these read GFPSVGKS, FTTLV, DLPG, SKMD, and SSL. Mg(2+) is bound by residues Ser172 and Thr192. Residues 354–432 form the OCT domain; it reads TFKEDEPAFK…IEDFTFEFVE (79 aa).

The protein belongs to the TRAFAC class OBG-HflX-like GTPase superfamily. OBG GTPase family. Monomer. Mg(2+) is required as a cofactor.

The protein localises to the cytoplasm. Its function is as follows. An essential GTPase which binds GTP, GDP and possibly (p)ppGpp with moderate affinity, with high nucleotide exchange rates and a fairly low GTP hydrolysis rate. Plays a role in control of the cell cycle, stress response, ribosome biogenesis and in those bacteria that undergo differentiation, in morphogenesis control. In Ligilactobacillus salivarius (strain UCC118) (Lactobacillus salivarius), this protein is GTPase Obg.